The sequence spans 349 residues: Probable ethanolamine kinase A (349 aa).

It belongs to the choline/ethanolamine kinase family.

It localises to the cytoplasm. It catalyses the reaction ethanolamine + ATP = phosphoethanolamine + ADP + H(+). Its pathway is phospholipid metabolism; phosphatidylethanolamine biosynthesis; phosphatidylethanolamine from ethanolamine: step 1/3. Functionally, highly specific for ethanolamine phosphorylation. May be a rate-controlling step in phosphatidylethanolamine biosynthesis. This is Probable ethanolamine kinase A (etnkA) from Dictyostelium discoideum (Social amoeba).